The following is a 128-amino-acid chain: NHP2-like protein 1 (128 aa).

The segment at 36-48 is interaction with U4 snRNA and U4atac snRNA; that stretch reads RKGANEATKTLNR. The tract at residues 96 to 128 is important for U4 snRNA-binding; sequence SRPVIACSVTIKEGSQLKPQIQSVQQAIERLLV.

Belongs to the eukaryotic ribosomal protein eL8 family. Identified in the spliceosome B complex. Component of the U4/U6-U5 tri-snRNP complex. Part of the small subunit (SSU) processome, composed of more than 70 proteins and the RNA chaperone small nucleolar RNA (snoRNA) U3.

It localises to the nucleus. The protein resides in the nucleolus. Its function is as follows. Part of the small subunit (SSU) processome, first precursor of the small eukaryotic ribosomal subunit. During the assembly of the SSU processome in the nucleolus, many ribosome biogenesis factors, an RNA chaperone and ribosomal proteins associate with the nascent pre-rRNA and work in concert to generate RNA folding, modifications, rearrangements and cleavage as well as targeted degradation of pre-ribosomal RNA by the RNA exosome. Involved in pre-mRNA splicing as component of the spliceosome. Binds to the 5'-stem-loop of U4 snRNA and thereby contributes to spliceosome assembly. The protein undergoes a conformational change upon RNA-binding. Core component of box C/D small nucleolar ribonucleoprotein (snoRNP) complexes that function in methylation of multiple sites on ribosomal RNAs (rRNAs) and messenger RNAs (mRNAs). The chain is NHP2-like protein 1 from Xenopus laevis (African clawed frog).